The primary structure comprises 245 residues: Glutathione S-transferase F4 (245 aa).

Positions 25-106 constitute a GST N-terminal domain; that stretch reads AGYKVHGDPF…YIAYVHSSRG (82 aa). Glutathione is bound by residues 35-36, 64-65, 77-78, and 90-91; these read ST, HK, QV, and ES. The 131-residue stretch at 114–244 folds into the GST C-terminal domain; the sequence is SHETMATLTM…QEKSWFNKPR (131 aa).

This sequence belongs to the GST superfamily. Phi family.

It is found in the cytoplasm. The protein resides in the cytosol. It carries out the reaction RX + glutathione = an S-substituted glutathione + a halide anion + H(+). Functionally, may be involved in the conjugation of reduced glutathione to a wide number of exogenous and endogenous hydrophobic electrophiles and have a detoxification role against certain herbicides. The sequence is that of Glutathione S-transferase F4 (GSTF4) from Arabidopsis thaliana (Mouse-ear cress).